Here is a 227-residue protein sequence, read N- to C-terminus: Cleavage and polyadenylation specificity factor subunit 5 (227 aa).

Serine 2 is subject to N-acetylserine. The interval 2–147 is necessary for RNA-binding; sequence SVVPPNRSQT…DWVIDDCIGN (146 aa). Position 15 is an omega-N-methylarginine (arginine 15). Residues lysine 23 and lysine 29 each carry the N6-acetyllysine modification. Position 40 is a phosphotyrosine (tyrosine 40). Lysine 56 is modified (N6-acetyllysine). The Nudix hydrolase domain maps to 76-201; it reads MRRTVEGVLI…KLVAAPLFEL (126 aa). The necessary for interactions with PAPOLA and PABPN1 stretch occupies residues 81–160; that stretch reads EGVLIVHEHR…PNFEPPQYPY (80 aa). The tract at residues 102–104 is interaction with RNA; it reads TFF. The short motif at 109–130 is the Nudix box element; sequence GELNPGEDEVEGLKRLMTEILG.

The protein belongs to the Nudix hydrolase family. CPSF5 subfamily. In terms of assembly, homodimer (via N- and C-terminus); binds RNA as homodimer. Component of the cleavage factor Im (CFIm) complex which is a heterotetramer composed of two subunits of NUDT21/CPSF5 and two subunits of CPSF6 or CPSF7 or a heterodimer of CPSF6 and CPSF7. The cleavage factor Im (CFIm) complex associates with the CPSF and CSTF complexes to promote the assembly of the core mRNA 3'-processing machinery. Interacts with CPSF6 (via the RRM domain); this interaction is direct and enhances binding to RNA. Interacts with CPSF7. Interacts with FIP1L1; this interaction occurs in a RNA sequence-specific manner. Interacts with PABPN1. Interacts (via N-terminus) with PAPOLA (via C-terminus); this interaction is direct and diminished by acetylation. Interacts with SNRNP70. Interacts with VIRMA. In terms of processing, acetylated mainly by p300/CBP, recruited to the complex by CPSF6. Acetylation decreases interaction with PAPAO. Deacetylated by the class I/II HDACs, HDAC1, HDAC3 and HDAC10, and by the class III HDACs, SIRT1 and SIRT2.

The protein localises to the nucleus. Its subcellular location is the cytoplasm. Functionally, component of the cleavage factor Im (CFIm) complex that functions as an activator of the pre-mRNA 3'-end cleavage and polyadenylation processing required for the maturation of pre-mRNA into functional mRNAs. CFIm contributes to the recruitment of multiprotein complexes on specific sequences on the pre-mRNA 3'-end, so called cleavage and polyadenylation signals (pA signals). Most pre-mRNAs contain multiple pA signals, resulting in alternative cleavage and polyadenylation (APA) producing mRNAs with variable 3'-end formation. The CFIm complex acts as a key regulator of cleavage and polyadenylation site choice during APA through its binding to 5'-UGUA-3' elements localized in the 3'-untranslated region (UTR) for a huge number of pre-mRNAs. NUDT21/CPSF5 activates indirectly the mRNA 3'-processing machinery by recruiting CPSF6 and/or CPSF7. Binds to 5'-UGUA-3' elements localized upstream of pA signals that act as enhancers of pre-mRNA 3'-end processing. The homodimer mediates simultaneous sequence-specific recognition of two 5'-UGUA-3' elements within the pre-mRNA. Plays a role in somatic cell fate transitions and pluripotency by regulating widespread changes in gene expression through an APA-dependent function. Binds to chromatin. Binds to, but does not hydrolyze mono- and di-adenosine nucleotides. This Bos taurus (Bovine) protein is Cleavage and polyadenylation specificity factor subunit 5 (NUDT21).